We begin with the raw amino-acid sequence, 148 residues long: UPF0756 membrane protein NMC1845 (148 aa).

4 helical membrane passes run Leu13 to Met35, His50 to Gly70, Phe80 to Gly100, and Val121 to Leu141.

The protein belongs to the UPF0756 family.

It localises to the cell membrane. This Neisseria meningitidis serogroup C / serotype 2a (strain ATCC 700532 / DSM 15464 / FAM18) protein is UPF0756 membrane protein NMC1845.